The primary structure comprises 146 residues: Large ribosomal subunit protein bL19 (146 aa).

This sequence belongs to the bacterial ribosomal protein bL19 family.

In terms of biological role, this protein is located at the 30S-50S ribosomal subunit interface and may play a role in the structure and function of the aminoacyl-tRNA binding site. This is Large ribosomal subunit protein bL19 from Bartonella henselae (strain ATCC 49882 / DSM 28221 / CCUG 30454 / Houston 1) (Rochalimaea henselae).